A 144-amino-acid polypeptide reads, in one-letter code: 3-hydroxyacyl-[acyl-carrier-protein] dehydratase FabZ (144 aa).

Residue His-47 is part of the active site.

Belongs to the thioester dehydratase family. FabZ subfamily.

Its subcellular location is the cytoplasm. The enzyme catalyses a (3R)-hydroxyacyl-[ACP] = a (2E)-enoyl-[ACP] + H2O. Functionally, involved in unsaturated fatty acids biosynthesis. Catalyzes the dehydration of short chain beta-hydroxyacyl-ACPs and long chain saturated and unsaturated beta-hydroxyacyl-ACPs. The protein is 3-hydroxyacyl-[acyl-carrier-protein] dehydratase FabZ of Dechloromonas aromatica (strain RCB).